The primary structure comprises 96 residues: ESAT-6-like protein EsxR (96 aa).

This sequence belongs to the WXG100 family. ESAT-6 subfamily.

The protein localises to the secreted. This is ESAT-6-like protein EsxR from Mycobacterium bovis (strain ATCC BAA-935 / AF2122/97).